The chain runs to 372 residues: NAD(P)H-quinone oxidoreductase subunit 1 (372 aa).

Helical transmembrane passes span 27–47, 97–117, 128–148, 166–186, 204–224, 254–274, 308–328, and 351–371; these read AVWM…GVLI, ALFT…YLIV, LGIG…GLLM, AAQS…IAMM, ILGW…IAAL, FALF…MVAI, AVGI…AILL, and VGLV…IAFG.

The protein belongs to the complex I subunit 1 family. NDH-1 is composed of at least 11 different subunits.

The protein resides in the cellular thylakoid membrane. It catalyses the reaction a plastoquinone + NADH + (n+1) H(+)(in) = a plastoquinol + NAD(+) + n H(+)(out). It carries out the reaction a plastoquinone + NADPH + (n+1) H(+)(in) = a plastoquinol + NADP(+) + n H(+)(out). Its function is as follows. NDH-1 shuttles electrons from an unknown electron donor, via FMN and iron-sulfur (Fe-S) centers, to quinones in the respiratory and/or the photosynthetic chain. The immediate electron acceptor for the enzyme in this species is believed to be plastoquinone. Couples the redox reaction to proton translocation, and thus conserves the redox energy in a proton gradient. The polypeptide is NAD(P)H-quinone oxidoreductase subunit 1 (Cyanothece sp. (strain PCC 7425 / ATCC 29141)).